Here is a 208-residue protein sequence, read N- to C-terminus: Putative dioxygenase RF_0617 (208 aa).

Belongs to the intradiol ring-cleavage dioxygenase family.

The sequence is that of Putative dioxygenase RF_0617 from Rickettsia felis (strain ATCC VR-1525 / URRWXCal2) (Rickettsia azadi).